Consider the following 1489-residue polypeptide: DNA-directed RNA polymerase subunit beta (1489 aa).

It belongs to the RNA polymerase beta chain family. The RNAP catalytic core consists of 2 alpha, 1 beta, 1 beta' and 1 omega subunit. When a sigma factor is associated with the core the holoenzyme is formed, which can initiate transcription.

The enzyme catalyses RNA(n) + a ribonucleoside 5'-triphosphate = RNA(n+1) + diphosphate. DNA-dependent RNA polymerase catalyzes the transcription of DNA into RNA using the four ribonucleoside triphosphates as substrates. In Koribacter versatilis (strain Ellin345), this protein is DNA-directed RNA polymerase subunit beta.